Here is a 140-residue protein sequence, read N- to C-terminus: uncharacterized protein (140 aa).

This is an uncharacterized protein from Sinorhizobium fredii (strain NBRC 101917 / NGR234).